The sequence spans 338 residues: Ketol-acid reductoisomerase (NADP(+)) (338 aa).

Positions Thr-2–Thr-182 constitute a KARI N-terminal Rossmann domain. NADP(+) is bound by residues Tyr-25 to Gln-28, Ser-51, Ser-53, and Asp-83 to Gln-86. His-108 is a catalytic residue. Gly-134 serves as a coordination point for NADP(+). Positions Thr-183 to Asn-330 constitute a KARI C-terminal knotted domain. Asp-191, Glu-195, Glu-227, and Glu-231 together coordinate Mg(2+). Ser-252 contributes to the substrate binding site.

This sequence belongs to the ketol-acid reductoisomerase family. It depends on Mg(2+) as a cofactor.

The catalysed reaction is (2R)-2,3-dihydroxy-3-methylbutanoate + NADP(+) = (2S)-2-acetolactate + NADPH + H(+). It catalyses the reaction (2R,3R)-2,3-dihydroxy-3-methylpentanoate + NADP(+) = (S)-2-ethyl-2-hydroxy-3-oxobutanoate + NADPH + H(+). Its pathway is amino-acid biosynthesis; L-isoleucine biosynthesis; L-isoleucine from 2-oxobutanoate: step 2/4. It participates in amino-acid biosynthesis; L-valine biosynthesis; L-valine from pyruvate: step 2/4. Involved in the biosynthesis of branched-chain amino acids (BCAA). Catalyzes an alkyl-migration followed by a ketol-acid reduction of (S)-2-acetolactate (S2AL) to yield (R)-2,3-dihydroxy-isovalerate. In the isomerase reaction, S2AL is rearranged via a Mg-dependent methyl migration to produce 3-hydroxy-3-methyl-2-ketobutyrate (HMKB). In the reductase reaction, this 2-ketoacid undergoes a metal-dependent reduction by NADPH to yield (R)-2,3-dihydroxy-isovalerate. The polypeptide is Ketol-acid reductoisomerase (NADP(+)) (Clostridium botulinum (strain Eklund 17B / Type B)).